We begin with the raw amino-acid sequence, 271 residues long: Ribosomal RNA small subunit methyltransferase A (271 aa).

Histidine 18, leucine 20, glycine 45, glutamate 66, aspartate 91, and asparagine 113 together coordinate S-adenosyl-L-methionine.

The protein belongs to the class I-like SAM-binding methyltransferase superfamily. rRNA adenine N(6)-methyltransferase family. RsmA subfamily.

Its subcellular location is the cytoplasm. It catalyses the reaction adenosine(1518)/adenosine(1519) in 16S rRNA + 4 S-adenosyl-L-methionine = N(6)-dimethyladenosine(1518)/N(6)-dimethyladenosine(1519) in 16S rRNA + 4 S-adenosyl-L-homocysteine + 4 H(+). Its function is as follows. Specifically dimethylates two adjacent adenosines (A1518 and A1519) in the loop of a conserved hairpin near the 3'-end of 16S rRNA in the 30S particle. May play a critical role in biogenesis of 30S subunits. The protein is Ribosomal RNA small subunit methyltransferase A of Baumannia cicadellinicola subsp. Homalodisca coagulata.